We begin with the raw amino-acid sequence, 456 residues long: DnaJ homolog dnj-10 (456 aa).

In terms of domain architecture, J spans 44–108 (DYYKTLGVDK…TKRQEYDAYG (65 aa)). The CR-type zinc finger occupies 178–257 (GATKNVSVNV…CEGEGQTVQR (80 aa)). 3 CXXCXGXG motif repeats span residues 208–215 (CPYCNGTG), 231–238 (CNRCRGSG), and 245–252 (CQECEGEG). The segment covering 395–429 (KGLEKNQKTEEKETKKNEEKKSEGASESQKRRSEP) has biased composition (basic and acidic residues). The disordered stretch occupies residues 395-443 (KGLEKNQKTEEKETKKNEEKKSEGASESQKRRSEPVAENAETIDENQEN).

The protein is DnaJ homolog dnj-10 (dnj-10) of Caenorhabditis elegans.